A 617-amino-acid polypeptide reads, in one-letter code: Protein fem-1 homolog C (617 aa).

ANK repeat units follow at residues 2–31 (DLKT…KDDV), 40–70 (NGAT…SVEI), 82–111 (EGAP…SVNN), 115–144 (TNST…DLEV), 148–177 (HGHT…DVNR), 181–210 (KGNT…RMEK), and 213–242 (YGMT…TSKN). TPR repeat units lie at residues 245–279 (INAL…RHSD) and 338–371 (SYYI…QQNN). 2 ANK repeats span residues 481-523 (NNFS…DVNV) and 527-556 (EQNS…HFDS).

This sequence belongs to the fem-1 family. As to quaternary structure, component of a CRL2 E3 ubiquitin-protein ligase complex, also named ECS (Elongin BC-CUL2/5-SOCS-box protein) complex.

It participates in protein modification; protein ubiquitination. Its function is as follows. Substrate-recognition component of a Cul2-RING (CRL2) E3 ubiquitin-protein ligase complex of the DesCEND (destruction via C-end degrons) pathway, which recognizes a C-degron located at the extreme C terminus of target proteins, leading to their ubiquitination and degradation. The C-degron recognized by the DesCEND pathway is usually a motif of less than ten residues and can be present in full-length proteins, truncated proteins or proteolytically cleaved forms. The CRL2(FEM1C) complex specifically recognizes proteins with an arginine at the C-terminus: recognizes and binds proteins ending with -Lys/Arg-Xaa-Arg and -Lys/Arg-Xaa-Xaa-Arg C-degrons, leading to their ubiquitination and degradation. The protein is Protein fem-1 homolog C of Xenopus laevis (African clawed frog).